Reading from the N-terminus, the 378-residue chain is MDSARAPTEDEIAKFLATRTSSQMLQLMRCIKQPAAQFAFTAKLLTITPVKNTPPTVPEKAKKALNAFVGFRCYYIAIPAFKPWPMKKLSNLISLLWEGDPNKSLWSLMAKAWSNIRDQVGKDQAPLDEFFGIICPHLELPDPAYYLDLHGWSLGVNQEGDPTLLRIIDSKPASIGIGHINLALSVEDIITFVQKAGFAPTYTPDANDTSPTFLGQSLSSTFEVNHPANSIPAASQVDQARVAARNRRRAKRQSARELEFQEKLENDLEFKEKINREMDLVLERTPPAGPDPLPDFDFTPFYEGVNNLICEHMAMEQSNAGYPEGAHLFNDFGIDSSKAYLGMDNFATDMPDLIDYDAFRLGANEDVALPVFDDIAHA.

The alpha box DNA-binding region spans 60–117 (KAKKALNAFVGFRCYYIAIPAFKPWPMKKLSNLISLLWEGDPNKSLWSLMAKAWSNIR). The tract at residues 235 to 256 (SQVDQARVAARNRRRAKRQSAR) is disordered. The span at 244–253 (ARNRRRAKRQ) shows a compositional bias: basic residues.

It belongs to the MATALPHA1 family.

It localises to the nucleus. In terms of biological role, mating type proteins are sequence specific DNA-binding proteins that act as master switches in fungal differentiation by controlling gene expression in a cell type-specific fashion. Transcriptional activator that induces the transcription of alpha-specific genes. The sequence is that of Mating-type protein MAT-1 (MAT1) from Cochliobolus ellisii (Curvularia ellisii).